The chain runs to 236 residues: Orotidine 5'-phosphate decarboxylase (236 aa).

Substrate-binding positions include Asp14, Lys36, 63 to 72, Thr123, Arg184, Gln193, Gly213, and Arg214; that span reads DLKFHDIPNT. Lys65 (proton donor) is an active-site residue.

This sequence belongs to the OMP decarboxylase family. Type 1 subfamily. In terms of assembly, homodimer.

The enzyme catalyses orotidine 5'-phosphate + H(+) = UMP + CO2. Its pathway is pyrimidine metabolism; UMP biosynthesis via de novo pathway; UMP from orotate: step 2/2. Catalyzes the decarboxylation of orotidine 5'-monophosphate (OMP) to uridine 5'-monophosphate (UMP). This chain is Orotidine 5'-phosphate decarboxylase, found in Marinobacter nauticus (strain ATCC 700491 / DSM 11845 / VT8) (Marinobacter aquaeolei).